The following is a 1405-amino-acid chain: DNA-directed RNA polymerase subunit beta' (1405 aa).

Residues Cys70, Cys72, Cys85, and Cys88 each contribute to the Zn(2+) site. Residues Asp458, Asp460, and Asp462 each contribute to the Mg(2+) site. Zn(2+) is bound by residues Cys813, Cys887, Cys894, and Cys897.

The protein belongs to the RNA polymerase beta' chain family. In terms of assembly, the RNAP catalytic core consists of 2 alpha, 1 beta, 1 beta' and 1 omega subunit. When a sigma factor is associated with the core the holoenzyme is formed, which can initiate transcription. It depends on Mg(2+) as a cofactor. Requires Zn(2+) as cofactor.

The enzyme catalyses RNA(n) + a ribonucleoside 5'-triphosphate = RNA(n+1) + diphosphate. DNA-dependent RNA polymerase catalyzes the transcription of DNA into RNA using the four ribonucleoside triphosphates as substrates. This is DNA-directed RNA polymerase subunit beta' from Albidiferax ferrireducens (strain ATCC BAA-621 / DSM 15236 / T118) (Rhodoferax ferrireducens).